Here is a 216-residue protein sequence, read N- to C-terminus: Large ribosomal subunit protein uL1A (216 aa).

2 positions are modified to phosphoserine: Ser85 and Ser128.

This sequence belongs to the universal ribosomal protein uL1 family. In terms of assembly, component of the large ribosomal subunit (LSU). Mature yeast ribosomes consist of a small (40S) and a large (60S) subunit. The 40S small subunit contains 1 molecule of ribosomal RNA (18S rRNA) and at least 33 different proteins. The large 60S subunit contains 3 rRNA molecules (25S, 5.8S and 5S rRNA) and at least 46 different proteins. uL1 forms part of the L1 stalk.

Its subcellular location is the cytoplasm. Functionally, component of the ribosome, a large ribonucleoprotein complex responsible for the synthesis of proteins in the cell. The small ribosomal subunit (SSU) binds messenger RNAs (mRNAs) and translates the encoded message by selecting cognate aminoacyl-transfer RNA (tRNA) molecules. The large subunit (LSU) contains the ribosomal catalytic site termed the peptidyl transferase center (PTC), which catalyzes the formation of peptide bonds, thereby polymerizing the amino acids delivered by tRNAs into a polypeptide chain. The nascent polypeptides leave the ribosome through a tunnel in the LSU and interact with protein factors that function in enzymatic processing, targeting, and the membrane insertion of nascent chains at the exit of the ribosomal tunnel. uL1 forms part of the L1 stalk, a mobile element that plays a role in evacuating the exit-site tRNA. This Schizosaccharomyces pombe (strain 972 / ATCC 24843) (Fission yeast) protein is Large ribosomal subunit protein uL1A (rpl102).